A 460-amino-acid polypeptide reads, in one-letter code: Lipase member H-B (460 aa).

A signal peptide spans 1–26; that stretch reads MLLSFYFNGLLLVGCLLSWGRSDTEG. Asn67 and Asn75 each carry an N-linked (GlcNAc...) asparagine glycan. Ser163 serves as the catalytic Nucleophile. Asn177 carries an N-linked (GlcNAc...) asparagine glycan. Asp187 acts as the Charge relay system in catalysis. The cysteines at positions 242 and 255 are disulfide-linked. The Charge relay system role is filled by His257. Disulfide bonds link Cys279/Cys290 and Cys293/Cys301. Asn289 is a glycosylation site (N-linked (GlcNAc...) asparagine). Asn366 carries an N-linked (GlcNAc...) asparagine glycan. An intrachain disulfide couples Cys436 to Cys455.

The protein belongs to the AB hydrolase superfamily. Lipase family.

The protein resides in the secreted. It is found in the cell membrane. The catalysed reaction is 1-hexadecanoyl-2-(9Z-octadecenoyl)-sn-glycero-3-phosphate + H2O = 2-(9Z-octadecenoyl)-sn-glycero-3-phosphate + hexadecanoate + H(+). In terms of biological role, hydrolyzes specifically phosphatidic acid (PA) to produce 2-acyl lysophosphatidic acid (LPA; a potent bioactive lipid mediator) and fatty acid. Does not hydrolyze other phospholipids, like phosphatidylserine (PS), phosphatidylcholine (PC) and phosphatidylethanolamine (PE) or triacylglycerol (TG). This is Lipase member H-B (liph-b) from Xenopus laevis (African clawed frog).